A 100-amino-acid chain; its full sequence is C-X-C motif chemokine 2 (100 aa).

Residues 1–31 form the signal peptide; sequence MAPPTRQLLNAVLVLLLLLATNHQGTGVVVA. Disulfide bonds link Cys-36–Cys-62 and Cys-38–Cys-78.

Belongs to the intercrine alpha (chemokine CxC) family. In terms of assembly, homotetramer. At least expressed in the lung and trachea.

The protein localises to the secreted. Its function is as follows. Chemotactic for human polymorphonuclear leukocytes but does not induce chemokinesis or an oxidative burst. Contributes to neutrophil activation during inflammation. The polypeptide is C-X-C motif chemokine 2 (Cxcl2) (Rattus norvegicus (Rat)).